We begin with the raw amino-acid sequence, 120 residues long: Chaperonin GroEL (120 aa).

23 to 27 (DGTTT) contributes to the ATP binding site.

The protein belongs to the chaperonin (HSP60) family. Forms a cylinder of 14 subunits composed of two heptameric rings stacked back-to-back. Interacts with the co-chaperonin GroES.

The protein localises to the cytoplasm. The catalysed reaction is ATP + H2O + a folded polypeptide = ADP + phosphate + an unfolded polypeptide.. Together with its co-chaperonin GroES, plays an essential role in assisting protein folding. The GroEL-GroES system forms a nano-cage that allows encapsulation of the non-native substrate proteins and provides a physical environment optimized to promote and accelerate protein folding. The protein is Chaperonin GroEL of Mycobacterium malmoense.